The sequence spans 96 residues: Large ribosomal subunit protein uL23 (96 aa).

This sequence belongs to the universal ribosomal protein uL23 family. As to quaternary structure, part of the 50S ribosomal subunit. Contacts protein L29, and trigger factor when it is bound to the ribosome.

In terms of biological role, one of the early assembly proteins it binds 23S rRNA. One of the proteins that surrounds the polypeptide exit tunnel on the outside of the ribosome. Forms the main docking site for trigger factor binding to the ribosome. The protein is Large ribosomal subunit protein uL23 of Onion yellows phytoplasma (strain OY-M).